The chain runs to 185 residues: ATP synthase subunit delta, chloroplastic (185 aa).

It belongs to the ATPase delta chain family. In terms of assembly, F-type ATPases have 2 components, F(1) - the catalytic core - and F(0) - the membrane proton channel. F(1) has five subunits: alpha(3), beta(3), gamma(1), delta(1), epsilon(1). CF(0) has four main subunits: a(1), b(1), b'(1) and c(10-14). The alpha and beta chains form an alternating ring which encloses part of the gamma chain. F(1) is attached to F(0) by a central stalk formed by the gamma and epsilon chains, while a peripheral stalk is formed by the delta, b and b' chains.

Its subcellular location is the plastid. The protein resides in the chloroplast thylakoid membrane. Functionally, f(1)F(0) ATP synthase produces ATP from ADP in the presence of a proton or sodium gradient. F-type ATPases consist of two structural domains, F(1) containing the extramembraneous catalytic core and F(0) containing the membrane proton channel, linked together by a central stalk and a peripheral stalk. During catalysis, ATP synthesis in the catalytic domain of F(1) is coupled via a rotary mechanism of the central stalk subunits to proton translocation. Its function is as follows. This protein is part of the stalk that links CF(0) to CF(1). It either transmits conformational changes from CF(0) to CF(1) or is implicated in proton conduction. This chain is ATP synthase subunit delta, chloroplastic, found in Guillardia theta (Cryptophyte).